Consider the following 162-residue polypeptide: Globin CTT-VI (162 aa).

Positions 1 to 15 are cleaved as a signal peptide; sequence MKFLVLALCIAAASA. The 145-residue stretch at 17 to 161 folds into the Globin domain; it reads VLTTEQADLV…TYAMLFSAMD (145 aa). 2 residues coordinate heme b: His75 and His110.

It belongs to the globin family. As to quaternary structure, homodimer.

The protein is Globin CTT-VI (CTT-6) of Chironomus thummi thummi (Midge).